The primary structure comprises 189 residues: dTTP/UTP pyrophosphatase (189 aa).

Asp70 serves as the catalytic Proton acceptor. Cys74 and Cys79 are oxidised to a cystine.

The protein belongs to the Maf family. YhdE subfamily. Homodimer. A divalent metal cation serves as cofactor.

The protein resides in the cytoplasm. The enzyme catalyses dTTP + H2O = dTMP + diphosphate + H(+). It carries out the reaction UTP + H2O = UMP + diphosphate + H(+). It catalyses the reaction CTP + H2O = CMP + diphosphate + H(+). The catalysed reaction is psi-UTP + H2O = psi-UMP + diphosphate + H(+). The enzyme catalyses 5-methyl-CTP + H2O = 5-methyl-CMP + diphosphate + H(+). It carries out the reaction 5-methyl-UTP + H2O = 5-methyl-UMP + diphosphate + H(+). Its function is as follows. Nucleoside triphosphate pyrophosphatase that hydrolyzes dTTP and UTP. Can also hydrolyze CTP and the modified nucleotides pseudo-UTP, 5-methyl-CTP (m(5)CTP) and 5-methyl-UTP (m(5)UTP). May have a dual role in cell division arrest and in preventing the incorporation of modified nucleotides into cellular nucleic acids. The polypeptide is dTTP/UTP pyrophosphatase (Bacillus subtilis (strain 168)).